A 130-amino-acid polypeptide reads, in one-letter code: Small ribosomal subunit protein uS11c (130 aa).

This sequence belongs to the universal ribosomal protein uS11 family. As to quaternary structure, part of the 30S ribosomal subunit.

The protein localises to the plastid. The protein resides in the chloroplast. This Cycas taitungensis (Prince sago) protein is Small ribosomal subunit protein uS11c.